A 39-amino-acid polypeptide reads, in one-letter code: Large ribosomal subunit protein bL36 (39 aa).

The protein belongs to the bacterial ribosomal protein bL36 family.

The polypeptide is Large ribosomal subunit protein bL36 (Lactiplantibacillus plantarum (strain ATCC BAA-793 / NCIMB 8826 / WCFS1) (Lactobacillus plantarum)).